A 1938-amino-acid chain; its full sequence is Myosin heavy chain, striated muscle (1938 aa).

The Myosin N-terminal SH3-like domain maps to 29-79 (DGKKNCWVPDEKEGFASAEIQSSKGDEITVKIVADSSTRTVKKDDIQSMNP). A Myosin motor domain is found at 83-775 (EKLEDMANMT…VLGNLEEMRD (693 aa)). 176-183 (GESGAGKT) serves as a coordination point for ATP. Residues 653-675 (LNKLMKNLYSTHPHFVRCIIPNE) are actin-binding. One can recognise an IQ domain in the interval 778–805 (LSKIISMFQAHIRGYLIRKAYKKLQDQR). Residues 836 to 1938 (LLSIARQEEE…RSSVSVSASN (1103 aa)) form a rodlike tail (S2 and LMM domains) region. A coiled-coil region spans residues 836 to 1938 (LLSIARQEEE…RSSVSVSASN (1103 aa)). Composition is skewed to basic and acidic residues over residues 1041 to 1058 (VRGD…DLKS) and 1212 to 1225 (SKLE…KREM). Disordered regions lie at residues 1041–1062 (VRGD…TQEN), 1187–1332 (SALR…EVRN), 1344–1363 (LEEE…KANN), and 1898–1938 (HELE…SASN). Positions 1265 to 1285 (RSINELQSQKSRLQAENSDLT) are enriched in polar residues. 3 stretches are compositionally biased toward basic and acidic residues: residues 1286–1303 (RQLE…KEKS), 1310–1332 (EDAR…EVRN), and 1344–1354 (LEEEQESKSDV). Residues 1922–1938 (RSSVSVQRSSVSVSASN) show a composition bias toward low complexity.

Belongs to the TRAFAC class myosin-kinesin ATPase superfamily. Myosin family. As to quaternary structure, muscle myosin is a hexameric protein that consists of 2 heavy chain subunits (MHC), 2 alkali light chain subunits (MLC) and 2 regulatory light chain subunits (MLC-2).

Its subcellular location is the cytoplasm. The protein resides in the myofibril. In terms of biological role, muscle contraction. Functionally, myosin is a protein that binds to F-actin and has ATPase activity that is activated by F-actin. The chain is Myosin heavy chain, striated muscle from Argopecten irradians (Bay scallop).